A 217-amino-acid polypeptide reads, in one-letter code: NAD(P)H-hydrate epimerase (217 aa).

In terms of domain architecture, YjeF N-terminal spans M1–S217. N48–D52 serves as a coordination point for (6S)-NADPHX. Positions 49 and 127 each coordinate K(+). (6S)-NADPHX contacts are provided by residues G131 to P137 and D165. T168 contributes to the K(+) binding site.

Belongs to the NnrE/AIBP family. It depends on K(+) as a cofactor.

The catalysed reaction is (6R)-NADHX = (6S)-NADHX. It carries out the reaction (6R)-NADPHX = (6S)-NADPHX. Its function is as follows. Catalyzes the epimerization of the S- and R-forms of NAD(P)HX, a damaged form of NAD(P)H that is a result of enzymatic or heat-dependent hydration. This is a prerequisite for the S-specific NAD(P)H-hydrate dehydratase to allow the repair of both epimers of NAD(P)HX. The sequence is that of NAD(P)H-hydrate epimerase from Cereibacter sphaeroides (strain KD131 / KCTC 12085) (Rhodobacter sphaeroides).